A 168-amino-acid polypeptide reads, in one-letter code: I-Kappa-B like protein G2 (168 aa).

ANK repeat units follow at residues 56–88 (SQRQ…DING) and 93–123 (GGNT…NKTA).

This sequence belongs to the polydnaviridae I-Kappa-B-like protein family.

In terms of biological role, suppresses the host immune response through NF-kappa-B inactivation. Possesses ankyrin repeat domains required for NF-kappa-B binding but lacks the regulatory regions required for dissociation from NF-kappa-B and degradation. Therefore, prevents host NF-kappa-B release and subsequent activation. This chain is I-Kappa-B like protein G2 (G4), found in Microplitis demolitor (Parasitoid wasp).